The primary structure comprises 250 residues: Probable transcriptional regulatory protein Nther_1800 (250 aa).

The protein belongs to the TACO1 family.

It localises to the cytoplasm. The chain is Probable transcriptional regulatory protein Nther_1800 from Natranaerobius thermophilus (strain ATCC BAA-1301 / DSM 18059 / JW/NM-WN-LF).